The chain runs to 196 residues: LNYEYSDLEPVLSAHLLSFHHGKHHQAYVNNLNATYEQIAAATKENDAHKIATLQSALRFNLGGHVNHWIYWDNLAPVKSGGGVLPDEHSPLTKAIKEKWGSYENFITLFNTRTAAIQGSGWGWLGYDTVSKSLRLFELGNQDMPEWSSIVPLLTIDVWEHAYYLDYQNLRPKYLTEVWKIVNWREVEKRYLQAIE.

Fe cation is bound by residues histidine 20, histidine 68, aspartate 157, and histidine 161.

Belongs to the iron/manganese superoxide dismutase family. Homotetramer. It depends on Fe cation as a cofactor.

The enzyme catalyses 2 superoxide + 2 H(+) = H2O2 + O2. In terms of biological role, destroys superoxide anion radicals which are normally produced within the cells and which are toxic to biological systems. The sequence is that of Superoxide dismutase [Fe] from Tetrahymena pyriformis.